Here is a 378-residue protein sequence, read N- to C-terminus: Dihydroorotate dehydrogenase (quinone) (378 aa).

FMN-binding positions include 77–81 (AGFDK) and Thr101. A substrate-binding site is contributed by Lys81. 126 to 130 (NRMGF) serves as a coordination point for substrate. Residues Asn158 and Asn191 each coordinate FMN. Residue Asn191 coordinates substrate. Ser194 (nucleophile) is an active-site residue. Residue Asn196 coordinates substrate. The FMN site is built by Lys229 and Thr257. 258 to 259 (NT) is a substrate binding site. FMN contacts are provided by residues Gly287, Gly316, and 337–338 (YT).

Belongs to the dihydroorotate dehydrogenase family. Type 2 subfamily. As to quaternary structure, monomer. FMN is required as a cofactor.

It localises to the cell membrane. It carries out the reaction (S)-dihydroorotate + a quinone = orotate + a quinol. The protein operates within pyrimidine metabolism; UMP biosynthesis via de novo pathway; orotate from (S)-dihydroorotate (quinone route): step 1/1. In terms of biological role, catalyzes the conversion of dihydroorotate to orotate with quinone as electron acceptor. The chain is Dihydroorotate dehydrogenase (quinone) from Synechococcus sp. (strain ATCC 27144 / PCC 6301 / SAUG 1402/1) (Anacystis nidulans).